Reading from the N-terminus, the 113-residue chain is uncharacterized protein (113 aa).

The signal sequence occupies residues 1–20 (MMKKSILAFLLLTSSAAALA).

This is an uncharacterized protein from Escherichia coli (strain K12).